Consider the following 500-residue polypeptide: Recombining binding protein suppressor of hairless (500 aa).

Residues 1 to 30 are disordered; sequence MDHTEGSPAEEPPAHAPSPGKFGERPPPKR. DNA-binding regions lie at residues 57 to 67 and 165 to 170; these read QKSYGNEKRFF and SKPSKK. Lys-175 carries the post-translational modification N6-acetyllysine. The interval 192–197 is DNA-binding; that stretch reads RLRSQT. The region spanning 355-445 is the IPT/TIG domain; sequence PVVESLQLNG…YSTSLTFTYT (91 aa). The segment covering 465 to 481 has biased composition (polar residues); sequence SSQVPPNESNTNSEGSY. Residues 465-500 are disordered; the sequence is SSQVPPNESNTNSEGSYTNASTNSTSVTSSTATVVS. A compositionally biased stretch (low complexity) spans 482 to 500; the sequence is TNASTNSTSVTSSTATVVS.

It belongs to the Su(H) family. As to quaternary structure, interacts with activated NOTCH1, NOTCH2 or NOTCH3. Interacts with MINT/SHARP. This interaction may mediate the recruitment of large corepressor complexes containing proteins such as HDAC1, HDAC2, NCOR2, SAP30, FHL1/KYOT2 and CIR1. Interacts with EP300, MAML1 and PTF1A. Interacts with RITA1/C12orf52, leading to nuclear export, prevent the interaction between RBPJ and NICD product and subsequent down-regulation of the Notch signaling pathway. Interacts with SNW1. Interacts with CHCHD2 and CXXC5. Interacts with BEND6 (via BEN domain). Interacts with NKAPL. Interacts with ZMIZ1. Interacts with RBM15. Interacts with L3MBTL3 and KDM1A; the interaction with KDM1A is weaker in the absence of L3MBTL3 and the interaction with L3MBTL3 is impaired by Notch-derived peptide containing the intracellular domain (NICD). (Microbial infection) Interacts with EBV EBNA2. Interacts with EBV EBNA3. Interacts with EBV EBNA4. Interacts with EBV EBNA6 (via N-terminus).

Its subcellular location is the nucleus. It localises to the cytoplasm. Its function is as follows. Transcriptional regulator that plays a central role in Notch signaling, a signaling pathway involved in cell-cell communication that regulates a broad spectrum of cell-fate determinations. Acts as a transcriptional repressor when it is not associated with Notch proteins. When associated with some NICD product of Notch proteins (Notch intracellular domain), it acts as a transcriptional activator that activates transcription of Notch target genes. Probably represses or activates transcription via the recruitment of chromatin remodeling complexes containing histone deacetylase or histone acetylase proteins, respectively. Specifically binds to the immunoglobulin kappa-type J segment recombination signal sequence. Binds specifically to methylated DNA. Binds to the oxygen responsive element of COX4I2 and activates its transcription under hypoxia conditions (4% oxygen). Negatively regulates the phagocyte oxidative burst in response to bacterial infection by repressing transcription of NADPH oxidase subunits. This Homo sapiens (Human) protein is Recombining binding protein suppressor of hairless.